Reading from the N-terminus, the 779-residue chain is Phosphoribosylformylglycinamidine synthase subunit PurL (779 aa).

H52 is an active-site residue. 2 residues coordinate ATP: Y55 and K94. E96 is a Mg(2+) binding site. Residues 97 to 100 and R119 each bind substrate; that span reads SHNH. H98 (proton acceptor) is an active-site residue. Residue D120 participates in Mg(2+) binding. Residue Q243 coordinates substrate. D271 contributes to the Mg(2+) binding site. 315–317 provides a ligand contact to substrate; the sequence is ESQ. N523 and G560 together coordinate ATP. N561 is a binding site for Mg(2+). Residue S563 coordinates substrate.

It belongs to the FGAMS family. In terms of assembly, monomer. Part of the FGAM synthase complex composed of 1 PurL, 1 PurQ and 2 PurS subunits.

The protein resides in the cytoplasm. The catalysed reaction is N(2)-formyl-N(1)-(5-phospho-beta-D-ribosyl)glycinamide + L-glutamine + ATP + H2O = 2-formamido-N(1)-(5-O-phospho-beta-D-ribosyl)acetamidine + L-glutamate + ADP + phosphate + H(+). It participates in purine metabolism; IMP biosynthesis via de novo pathway; 5-amino-1-(5-phospho-D-ribosyl)imidazole from N(2)-formyl-N(1)-(5-phospho-D-ribosyl)glycinamide: step 1/2. Functionally, part of the phosphoribosylformylglycinamidine synthase complex involved in the purines biosynthetic pathway. Catalyzes the ATP-dependent conversion of formylglycinamide ribonucleotide (FGAR) and glutamine to yield formylglycinamidine ribonucleotide (FGAM) and glutamate. The FGAM synthase complex is composed of three subunits. PurQ produces an ammonia molecule by converting glutamine to glutamate. PurL transfers the ammonia molecule to FGAR to form FGAM in an ATP-dependent manner. PurS interacts with PurQ and PurL and is thought to assist in the transfer of the ammonia molecule from PurQ to PurL. The chain is Phosphoribosylformylglycinamidine synthase subunit PurL from Prochlorococcus marinus (strain AS9601).